A 148-amino-acid chain; its full sequence is MFDVTLLILLGLAALGFISHNTTVAVSILVLIIVRVTPLNTFFPWIEKQGLTVGIIILTIGVMAPIASGTLPPSTLIHSFVNWKSLVAIAVGVFVSWLGGRGITLMGNQPQLVAGLLVGTVLGVALFRGVPVGPLIAAGLVSLIVGKQ.

A run of 4 helical transmembrane segments spans residues 14 to 34, 51 to 71, 86 to 106, and 121 to 141; these read ALGF…LIIV, LTVG…SGTL, LVAI…ITLM, and VLGV…AGLV.

It belongs to the UPF0756 family.

The protein localises to the cell membrane. This chain is UPF0756 membrane protein YeaL, found in Salmonella choleraesuis (strain SC-B67).